Here is a 195-residue protein sequence, read N- to C-terminus: Nucleoside triphosphate pyrophosphatase (195 aa).

The active-site Proton acceptor is aspartate 70.

It belongs to the Maf family. Requires a divalent metal cation as cofactor.

It localises to the cytoplasm. The catalysed reaction is a ribonucleoside 5'-triphosphate + H2O = a ribonucleoside 5'-phosphate + diphosphate + H(+). It catalyses the reaction a 2'-deoxyribonucleoside 5'-triphosphate + H2O = a 2'-deoxyribonucleoside 5'-phosphate + diphosphate + H(+). Its function is as follows. Nucleoside triphosphate pyrophosphatase. May have a dual role in cell division arrest and in preventing the incorporation of modified nucleotides into cellular nucleic acids. In Synechocystis sp. (strain ATCC 27184 / PCC 6803 / Kazusa), this protein is Nucleoside triphosphate pyrophosphatase.